A 123-amino-acid polypeptide reads, in one-letter code: Protein Wnt-7a (123 aa).

A lipid anchor (O-palmitoleoyl serine; by PORCN) is attached at Ser-1. The tract at residues 33-61 (VEPVRTHRNKRPVFLKIKKPLSYRKPMVT) is disordered linker. Cysteines 89 and 104 form a disulfide. 2 N-linked (GlcNAc...) asparagine glycosylation sites follow: Asn-90 and Asn-96.

This sequence belongs to the Wnt family. As to quaternary structure, forms a soluble 1:1 complex with AFM; this prevents oligomerization and is required for prolonged biological activity. The complex with AFM may represent the physiological form in body fluids. Interacts with FZD5. Interacts with PORCN. Palmitoleoylation is required for efficient binding to frizzled receptors. Depalmitoleoylation leads to Wnt signaling pathway inhibition.

It localises to the secreted. The protein localises to the extracellular space. Its subcellular location is the extracellular matrix. In terms of biological role, ligand for members of the frizzled family of seven transmembrane receptors that functions in the canonical Wnt/beta-catenin signaling pathway. Plays an important role in embryonic development, including dorsal versus ventral patterning during limb development, skeleton development and urogenital tract development. Required for central nervous system (CNS) angiogenesis and blood-brain barrier regulation. The chain is Protein Wnt-7a (WNT-7A) from Alopias vulpinus (Common thresher shark).